The sequence spans 137 residues: Large ribosomal subunit protein uL16 (137 aa).

This sequence belongs to the universal ribosomal protein uL16 family. Part of the 50S ribosomal subunit.

Its function is as follows. Binds 23S rRNA and is also seen to make contacts with the A and possibly P site tRNAs. This Methylocella silvestris (strain DSM 15510 / CIP 108128 / LMG 27833 / NCIMB 13906 / BL2) protein is Large ribosomal subunit protein uL16.